The following is a 449-amino-acid chain: Probable glucuronosyltransferase 47 A (449 aa).

The Cytoplasmic segment spans residues 1-31; sequence MEHPLECADSCSLAMSWFCNKKCRGWGLMKR. Residues 32–52 form a helical; Signal-anchor for type II membrane protein membrane-spanning segment; that stretch reads TVVASGLRSVVLLLLFIYFVQ. Topologically, residues 53-449 are lumenal; it reads DVTAEMGHQR…GDLYPWGNDL (397 aa). Asn172 and Asn433 each carry an N-linked (GlcNAc...) asparagine glycan.

Belongs to the glycosyltransferase 47 family. Mostly expressed in newly formed or expanding tissues.

Its subcellular location is the golgi apparatus membrane. In terms of biological role, involved in the synthesis of glucuronoxylan hemicellulose in secondary cell walls. This chain is Probable glucuronosyltransferase 47 A, found in Physcomitrium patens (Spreading-leaved earth moss).